We begin with the raw amino-acid sequence, 465 residues long: Kynurenine 3-monooxygenase (465 aa).

The tract at residues 1–26 (MSPGIVSQEVNGRQEPTEAARDERHG) is disordered. A compositionally biased stretch (basic and acidic residues) spans 15–25 (EPTEAARDERH). 2 helical membrane passes run 405 to 427 (LLFR…SMPY) and 440 to 462 (LLKR…IYAQ).

This sequence belongs to the aromatic-ring hydroxylase family. KMO subfamily. FAD serves as cofactor.

The protein localises to the mitochondrion. The protein resides in the membrane. It catalyses the reaction L-kynurenine + NADPH + O2 + H(+) = 3-hydroxy-L-kynurenine + NADP(+) + H2O. The protein operates within cofactor biosynthesis; NAD(+) biosynthesis; quinolinate from L-kynurenine: step 1/3. Catalyzes the hydroxylation of L-kynurenine (L-Kyn) to form 3-hydroxy-L-kynurenine (L-3OHKyn). Required for synthesis of quinolinic acid. The sequence is that of Kynurenine 3-monooxygenase from Drosophila melanogaster (Fruit fly).